The chain runs to 168 residues: Protein YciE (168 aa).

This is Protein YciE (yciE) from Escherichia coli (strain K12).